The chain runs to 474 residues: NADH-ubiquinone oxidoreductase chain 4 (474 aa).

13 helical membrane passes run 34–54 (SFFLMLVLALFCALFTFDLMF), 86–106 (LYGLILVFLCLLTGFVAISTV), 115–135 (LKFYLIFFQFFLAVLGFIKCS), 137–157 (LIAFFFFYEVLMLGSVLVVFF), 167–187 (AVIYFVAWTQLGSLFVLLACL), 211–231 (AMTIYSLLFVGFGIKFPIWPL), 242–262 (ASTGFSIYLSGFLVKTALFGF), 276–295 (TFFLAVLVAGVIDSSLNMWS), 302–322 (LVAYCTIQEMNLIAIFFLKGD), 325–345 (LIAYGFLFTIMHALMSTLMFF), 373–393 (ALAIIFMVLFFSGILGTLKFV), 405–425 (VSWPIGVIFVVVVSAIGLIGF), and 454–474 (YIIFLCFAGLIFLTFLPFLMI).

Belongs to the complex I subunit 4 family.

It is found in the mitochondrion membrane. The catalysed reaction is a ubiquinone + NADH + 5 H(+)(in) = a ubiquinol + NAD(+) + 4 H(+)(out). Functionally, core subunit of the mitochondrial membrane respiratory chain NADH dehydrogenase (Complex I) that is believed to belong to the minimal assembly required for catalysis. Complex I functions in the transfer of electrons from NADH to the respiratory chain. The immediate electron acceptor for the enzyme is believed to be ubiquinone. In Paramecium tetraurelia, this protein is NADH-ubiquinone oxidoreductase chain 4 (ND4).